The primary structure comprises 53 residues: Metallocarboxypeptidase inhibitor b (53 aa).

Cystine bridges form between Cys-9-Cys-23, Cys-15-Cys-51, and Cys-27-Cys-38. Residue Ala-53 coordinates Zn(2+).

In terms of biological role, metallocarboxypeptidase inhibitor. Has an inhibitory effect on bovine CPA1 and porcine CPB1. Does not inhibit D.melanogaster svr (carboxypeptidase D). Shows no activity against serine proteases subtilisin or bovine trypsin, cysteine protease papain, and aspartyl protease porcine pepsin. This Nerita versicolor (Four-tooth nerite) protein is Metallocarboxypeptidase inhibitor b.